Reading from the N-terminus, the 1400-residue chain is DNA-directed RNA polymerase subunit beta' (1400 aa).

Residues cysteine 70, cysteine 72, cysteine 85, and cysteine 88 each contribute to the Zn(2+) site. Residues aspartate 460, aspartate 462, and aspartate 464 each contribute to the Mg(2+) site. Residues cysteine 814, cysteine 888, cysteine 895, and cysteine 898 each contribute to the Zn(2+) site.

Belongs to the RNA polymerase beta' chain family. The RNAP catalytic core consists of 2 alpha, 1 beta, 1 beta' and 1 omega subunit. When a sigma factor is associated with the core the holoenzyme is formed, which can initiate transcription. It depends on Mg(2+) as a cofactor. Requires Zn(2+) as cofactor.

The catalysed reaction is RNA(n) + a ribonucleoside 5'-triphosphate = RNA(n+1) + diphosphate. Its function is as follows. DNA-dependent RNA polymerase catalyzes the transcription of DNA into RNA using the four ribonucleoside triphosphates as substrates. This Methylococcus capsulatus (strain ATCC 33009 / NCIMB 11132 / Bath) protein is DNA-directed RNA polymerase subunit beta'.